Reading from the N-terminus, the 162-residue chain is Phosphopantetheine adenylyltransferase (162 aa).

Ser-9 is a binding site for substrate. Residues Ser-9–Phe-10 and His-17 each bind ATP. Lys-41, Thr-73, and Arg-87 together coordinate substrate. Residues Gly-88–Arg-90, Glu-98, and Tyr-123–Ser-129 contribute to the ATP site.

This sequence belongs to the bacterial CoaD family. As to quaternary structure, homohexamer. Mg(2+) is required as a cofactor.

The protein resides in the cytoplasm. The enzyme catalyses (R)-4'-phosphopantetheine + ATP + H(+) = 3'-dephospho-CoA + diphosphate. Its pathway is cofactor biosynthesis; coenzyme A biosynthesis; CoA from (R)-pantothenate: step 4/5. Reversibly transfers an adenylyl group from ATP to 4'-phosphopantetheine, yielding dephospho-CoA (dPCoA) and pyrophosphate. The protein is Phosphopantetheine adenylyltransferase of Carboxydothermus hydrogenoformans (strain ATCC BAA-161 / DSM 6008 / Z-2901).